Consider the following 208-residue polypeptide: Ribosome maturation factor RimP (208 aa).

Positions 189–208 are disordered; it reads EAPETGATTMARDGSEEETK.

This sequence belongs to the RimP family.

Its subcellular location is the cytoplasm. Its function is as follows. Required for maturation of 30S ribosomal subunits. The polypeptide is Ribosome maturation factor RimP (Ruegeria pomeroyi (strain ATCC 700808 / DSM 15171 / DSS-3) (Silicibacter pomeroyi)).